The sequence spans 348 residues: D-alanine--D-alanine ligase (348 aa).

One can recognise an ATP-grasp domain in the interval 132 to 334; sequence KRILEVAGVP…YSDLIKELVV (203 aa). 162-217 lines the ATP pocket; that stretch reads LEKLTFPVFVKPANMGSSVGISKAENESELRSAIDLALKYDSRILIEQGVVAREIE. Mg(2+)-binding residues include Asp-288, Glu-301, and Asn-303.

Belongs to the D-alanine--D-alanine ligase family. It depends on Mg(2+) as a cofactor. The cofactor is Mn(2+).

The protein resides in the cytoplasm. The enzyme catalyses 2 D-alanine + ATP = D-alanyl-D-alanine + ADP + phosphate + H(+). Its pathway is cell wall biogenesis; peptidoglycan biosynthesis. Its function is as follows. Cell wall formation. The sequence is that of D-alanine--D-alanine ligase from Streptococcus thermophilus (strain ATCC BAA-250 / LMG 18311).